Here is a 323-residue protein sequence, read N- to C-terminus: Low affinity immunoglobulin gamma Fc region receptor II-c (323 aa).

The first 42 residues, 1 to 42 (MGILSFLPVLATESDWADCKSPQPWGHMLLWTAVLFLAPVAG), serve as a signal peptide directing secretion. At 43–223 (TPAAPPKAVL…VQAPSSSPMG (181 aa)) the chain is on the extracellular side. 2 Ig-like C2-type domains span residues 48-127 (PKAV…VHLT) and 131-213 (EWLV…VTIT). Disulfide bonds link cysteine 71–cysteine 113 and cysteine 152–cysteine 196. N-linked (GlcNAc...) asparagine glycosylation is found at asparagine 106, asparagine 180, and asparagine 187. A helical transmembrane segment spans residues 224–246 (IIVAVVTGIAVAAIVAAVVALIY). Residues 247 to 323 (CRKKRISANS…PPNDHVNSNN (77 aa)) lie on the Cytoplasmic side of the membrane. Positions 277–323 (KRQPEETNNDYETADGGYMTLNPRAPTDDDKNIYLTLPPNDHVNSNN) are disordered. A phosphotyrosine; by SRC-type Tyr-kinases mark is found at tyrosine 294 and tyrosine 310.

Post-translationally, phosphorylated by SRC-type Tyr-kinases such as LYN, BLK, FYN and SYK. As to expression, isoform IIC1 is detected in monocytes, macrophages, polymorphonuclear cells and natural killer cells.

It is found in the cytoplasm. The protein localises to the cell membrane. In terms of biological role, receptor for the Fc region of complexed immunoglobulins gamma. Low affinity receptor. Involved in a variety of effector and regulatory functions such as phagocytosis of immune complexes and modulation of antibody production by B-cells. The chain is Low affinity immunoglobulin gamma Fc region receptor II-c (FCGR2C) from Homo sapiens (Human).